The following is a 381-amino-acid chain: O-phospho-L-seryl-tRNA:Cys-tRNA synthase (381 aa).

Pyridoxal 5'-phosphate is bound by residues 86–87 (AR), Asn192, and 215–217 (SGH). Lys218 bears the N6-(pyridoxal phosphate)lysine mark.

The protein belongs to the SepCysS family. As to quaternary structure, homodimer. Interacts with SepRS. Requires pyridoxal 5'-phosphate as cofactor.

It carries out the reaction O-phospho-L-seryl-tRNA(Cys) + hydrogen sulfide + H(+) = L-cysteinyl-tRNA(Cys) + phosphate. Its function is as follows. Converts O-phospho-L-seryl-tRNA(Cys) (Sep-tRNA(Cys)) to L-cysteinyl-tRNA(Cys) (Cys-tRNA(Cys)). This chain is O-phospho-L-seryl-tRNA:Cys-tRNA synthase, found in Methanococcus vannielii (strain ATCC 35089 / DSM 1224 / JCM 13029 / OCM 148 / SB).